We begin with the raw amino-acid sequence, 288 residues long: uncharacterized protein (288 aa).

The protein to M.bovis Mb1522c, M.leprae ML1804 and M.avium MAV321.

This is an uncharacterized protein from Mycobacterium tuberculosis (strain CDC 1551 / Oshkosh).